A 518-amino-acid chain; its full sequence is DNA nucleotidylexotransferase (518 aa).

Positions 11–17 (FGKKRQK) match the Nuclear localization signal motif. The BRCT domain maps to 27 to 124 (IYEIKFHEFV…KPVDTKGKYQ (98 aa)). The interval 153-518 (SQYACQRRTT…EYIQPSERNA (366 aa)) is mediates interaction with DNTTIP2. Positions 260 to 264 (VGLKT) are involved in DNA binding. Residues 335 to 340 (GFRRGK) and 344 to 347 (HDVD) contribute to the a 2'-deoxyribonucleoside 5'-triphosphate site. Residues aspartate 345, aspartate 347, and aspartate 442 each coordinate Mg(2+). Position 457 to 458 (457 to 458 (GW)) interacts with a 2'-deoxyribonucleoside 5'-triphosphate.

This sequence belongs to the DNA polymerase type-X family. As to quaternary structure, interacts with PRP19 and DNTTIP1. Interacts with TRERF1. Forms a ternary complex with DNTTIP2 and core histone. Released from this complex by PCNA. Requires Mg(2+) as cofactor.

The protein localises to the nucleus. The catalysed reaction is DNA(n) + a 2'-deoxyribonucleoside 5'-triphosphate = DNA(n+1) + diphosphate. Functionally, template-independent DNA polymerase which catalyzes the random addition of deoxynucleoside 5'-triphosphate to the 3'-end of a DNA initiator. One of the in vivo functions of this enzyme is the addition of nucleotides at the junction (N region) of rearranged Ig heavy chain and T-cell receptor gene segments during the maturation of B- and T-cells. The polypeptide is DNA nucleotidylexotransferase (DNTT) (Monodelphis domestica (Gray short-tailed opossum)).